The primary structure comprises 259 residues: MLEARLEQASILKKVVDAIKDLVQDCNFDCNDSGIALQAMDNSHVALVSMMLKAEGFSPYRCDRNIALGVNLTSLTKVLRAAQNEDILTLKAEDAPDVLNLVFESSETDRISEYDLKLMDIDQEHLGIPETEYAATITMPSNEFKRITTDLMAMSESVTIEANKDGVKFSCQGDIGNGSVTLRQHTNVEKPNESIEIELSEPVSLTFSLKYLVNFCKASALSNTVKICLSNEVPLLVEYSLGGSSYLRFYLAPKIGDDE.

The DNA-binding element occupies R61–R80. A Glycyl lysine isopeptide (Lys-Gly) (interchain with G-Cter in SUMO); alternate cross-link involves residue K164. A Glycyl lysine isopeptide (Lys-Gly) (interchain with G-Cter in ubiquitin); alternate cross-link involves residue K164.

It belongs to the PCNA family. Homotrimer. In terms of processing, monoubiquitinated on Lys-164 upon DNA damage, and then polyubiquitinated through 'Lys-63'-linkage.

The protein localises to the nucleus. In terms of biological role, this protein is an auxiliary protein of DNA polymerase delta and is involved in the control of eukaryotic DNA replication by increasing the polymerase's processibility during elongation of the leading strand. Involved in DNA repair. The protein is Proliferating cell nuclear antigen of Chaetomium thermophilum (strain DSM 1495 / CBS 144.50 / IMI 039719) (Thermochaetoides thermophila).